We begin with the raw amino-acid sequence, 727 residues long: Glucans biosynthesis glucosyltransferase H (727 aa).

The tract at residues serine 18–threonine 45 is disordered. The next 7 membrane-spanning stretches (helical) occupy residues phenylalanine 58–valine 78, leucine 90–isoleucine 110, leucine 278–valine 298, isoleucine 408–alanine 428, leucine 460–leucine 480, isoleucine 496–isoleucine 516, and leucine 572–tryptophan 592.

The protein belongs to the glycosyltransferase 2 family. OpgH subfamily.

The protein resides in the cell inner membrane. It functions in the pathway glycan metabolism; osmoregulated periplasmic glucan (OPG) biosynthesis. Involved in the biosynthesis of osmoregulated periplasmic glucans (OPGs). The protein is Glucans biosynthesis glucosyltransferase H of Shewanella putrefaciens (strain CN-32 / ATCC BAA-453).